A 217-amino-acid polypeptide reads, in one-letter code: Homologous-pairing protein 2 homolog (217 aa).

Residues 93–153 (IVALTAKVQS…LKNIKAATNH (61 aa)) adopt a coiled-coil conformation. The DNA-binding stretch occupies residues 118 to 182 (SSALTTPEMQ…WRKRKRMATE (65 aa)).

This sequence belongs to the HOP2 family. As to quaternary structure, interacts with the DNA-binding domain of the nuclear receptors NR3C1/GR, ESR2/ER-beta, THRB and RXRA. Forms a stable heterodimer with MND1. Interacts with PSMC3/TBP1. Post-translationally, PTM: Phosphorylated by PKA, PKC and MAPK. In terms of tissue distribution, highly expressed in testis and colon.

The protein localises to the nucleus. Functionally, plays an important role in meiotic recombination. Stimulates DMC1-mediated strand exchange required for pairing homologous chromosomes during meiosis. The complex PSMC3IP/MND1 binds DNA, stimulates the recombinase activity of DMC1 as well as DMC1 D-loop formation from double-strand DNA. This complex stabilizes presynaptic RAD51 and DMC1 filaments formed on single strand DNA to capture double-strand DNA. This complex stimulates both synaptic and presynaptic critical steps in RAD51 and DMC1-promoted homologous pairing. May inhibit HIV-1 viral protein TAT activity and modulate the activity of proteasomes through association with PSMC3. Acts as a tissue specific coactivator of hormone-dependent transcription mediated by nuclear receptors. This chain is Homologous-pairing protein 2 homolog (PSMC3IP), found in Homo sapiens (Human).